The following is a 260-amino-acid chain: Global transcriptional regulator CodY (260 aa).

Residues 1–159 are GAF domain; the sequence is MPNLLQKTRK…SSTVVGIQLL (159 aa). The segment at residues 207–226 is a DNA-binding region (H-T-H motif); that stretch reads ASVIADRIGITRSVIVNALR.

It belongs to the CodY family.

The protein localises to the cytoplasm. In terms of biological role, DNA-binding global transcriptional regulator which is involved in the adaptive response to starvation and acts by directly or indirectly controlling the expression of numerous genes in response to nutrient availability. During rapid exponential growth, CodY is highly active and represses genes whose products allow adaptation to nutrient depletion. In Streptococcus equi subsp. zooepidemicus (strain MGCS10565), this protein is Global transcriptional regulator CodY.